We begin with the raw amino-acid sequence, 867 residues long: Cilium assembly protein DZIP1 (867 aa).

Residues 12–203 (MPFQKHVYYP…KANYYQCHFC (192 aa)) form a mediates interaction with PCM1 region. Positions 12–367 (MPFQKHVYYP…QDFHNVMQLL (356 aa)) are mediates interaction with GLI3 and localization to the cilium basal body. Positions 154–278 (CDGEQSKKLL…SKEYEMQKTK (125 aa)) are required for interaction with DAZ1. The C2H2-type zinc finger occupies 198 to 221 (YQCHFCDKAFMNQAFLQSHIQRRH). Ser-226 is modified (phosphoserine; by PLK1). 3 coiled-coil regions span residues 230–340 (YQKN…KSNI), 401–445 (TSMI…FTCN), and 568–588 (DQLH…EREI). Residues 446–617 (PLNSISEPKG…EKALLSSDQC (172 aa)) are mediates interaction with GDI2 and RAB8A. Polar residues-rich tracts occupy residues 643–654 (LIRQKAVSTDRT), 671–680 (KSSTITTPPF), and 708–718 (NKGSFGKNTVK). 2 disordered regions span residues 643–768 (LIRQ…GGTN) and 796–867 (SLEE…TSDV). A compositionally biased stretch (acidic residues) spans 722–733 (DGTEGSEIEDTD). The span at 807-823 (SGKEQKEPPPAKNEPHF) shows a compositional bias: basic and acidic residues. Residues 848-859 (SSTLKSSLVTVT) show a composition bias toward low complexity.

The protein belongs to the DZIP C2H2-type zinc-finger protein family. As to quaternary structure, interacts with DAZ1. Interacts with the BBSome; recruits the BBSome to centriolar satellites of the cilium. Interacts with PCM1; localizes DZIP1 and the associated BBSome to centriolar satellites. Interacts with RAB8A (GDP-bound inactive form); recruits RAB8A to the basal body of the cilium and prevents its inhibition by GDI2. Interacts with GDI2; negatively regulates the interaction of GDI2 with GDP-bound RAB8A. Interacts with GLI3; retains GLI3 within the cytoplasm. Interacts with CEP164. Interacts with IFT88. Post-translationally, phosphorylation at Ser-226 by PLK1 before mitosis prevents interaction with PCM1 and localization to centriolar satellites. Thereby, it negatively regulates the localization of the BBSome to centriolar satellites. Predominantly expressed in testis (at protein level). Also expressed in fetal brain, adult oocytes and ovary. Expressed in undifferentiated ES cells. In testis, it is specifically expressed in germ cells (at protein level). Expressed in mature germ cells and secondary spermatocytes, while it is weakly or not expressed in primary spermatocytes.

It is found in the cytoplasm. The protein localises to the cytoskeleton. Its subcellular location is the cilium basal body. The protein resides in the microtubule organizing center. It localises to the centrosome. It is found in the centriolar satellite. The protein localises to the centriole. Its subcellular location is the nucleus. The protein resides in the nucleus speckle. Its function is as follows. Molecular adapter that recruits protein complexes required for cilium assembly and function to the cilium basal body. At the exit of mitosis, localizes to the basal body and ciliary base of the forming primary cilium where it recruits and activates RAB8A to direct vesicle-mediated transport of proteins to the cilium. Also recruits the BBSome, a complex involved in cilium biogenesis, by bridging it to PCM1 at the centriolar satellites of the cilium. It is also required for the recruitment to the cilium basal body of the intraflagellar transport (IFT) machinery as well as the ciliary appendage proteins CEP164 and NINEIN. Functions as a regulator of Hedgehog signaling both through its role in cilium assembly but also probably through its ability to retain GLI3 within the cytoplasm. It is involved in spermatogenesis through its role in organization of the basal body and assembly of the sperm flagellum. Also indirectly involved in heart development through its function in ciliogenesis. This is Cilium assembly protein DZIP1 from Homo sapiens (Human).